Here is a 663-residue protein sequence, read N- to C-terminus: Probable peptidyl-glycine alpha-amidating monooxygenase pamn-1 (663 aa).

A signal peptide spans 1–21 (MNDRISINLIYLVLTFCCVSA). The peptidylglycine alpha-hydroxylating monooxygenase stretch occupies residues 1-300 (MNDRISINLI…YDAKLDNPYP (300 aa)). Cu(2+)-binding residues include H75 and H76. C82 and C98 are oxidised to a cystine. A Cu(2+)-binding site is contributed by H142. Residue N191 is glycosylated (N-linked (GlcNAc...) asparagine). Intrachain disulfides connect C194–C305 and C261–C283. Residues H210 and H212 each contribute to the Cu(2+) site. The N-linked (GlcNAc...) asparagine glycan is linked to N269. M282 is a binding site for Cu(2+). The interval 301–663 (QGAICAKDYP…WQFKIRHDQN (363 aa)) is peptidyl-alpha-hydroxyglycine alpha-amidating lyase. A protein is bound at residue R376. N411 carries N-linked (GlcNAc...) asparagine glycosylation. NHL repeat units follow at residues 411–454 (NQTK…WKIE), 464–507 (SGEL…LDLN), 511–554 (IRQF…MTTQ), and 626–656 (FGQPHCLRVCPDGGHIFVGDIAEGKARLWQF). Residues C478 and C497 are joined by a disulfide bond. Y496 and R543 together coordinate a protein.

This sequence in the C-terminal section; belongs to the peptidyl-alpha-hydroxyglycine alpha-amidating lyase family. It in the N-terminal section; belongs to the copper type II ascorbate-dependent monooxygenase family. In terms of assembly, monomer. Zn(2+) is required as a cofactor. It depends on Cu(2+) as a cofactor.

Its subcellular location is the secreted. It catalyses the reaction a [peptide]-C-terminal glycine + 2 L-ascorbate + O2 = a [peptide]-C-terminal (2S)-2-hydroxyglycine + 2 monodehydro-L-ascorbate radical + H2O. It carries out the reaction a [peptide]-C-terminal (2S)-2-hydroxyglycine = a [peptide]-C-terminal amide + glyoxylate. Functionally, probable bifunctional enzyme that catalyzes 2 sequential steps in C-terminal alpha-amidation of peptides. The monooxygenase part produces an unstable peptidyl(2-hydroxyglycine) intermediate that is dismutated to glyoxylate and the corresponding desglycine peptide amide by the lyase part. C-terminal amidation of peptides such as neuropeptides is essential for full biological activity. The polypeptide is Probable peptidyl-glycine alpha-amidating monooxygenase pamn-1 (Caenorhabditis elegans).